The following is a 473-amino-acid chain: DNA-binding protein (473 aa).

Disordered regions lie at residues 1–69 (MAGR…GFSH) and 85–111 (RRLEPKGVPPPSEENNEEEEPSTSKAV). Residues 7 to 18 (ELPTITPYLQET) are compositionally biased toward polar residues. The segment covering 53–62 (PDSEEEEEEV) has biased composition (acidic residues). Position 141 is a phosphotyrosine; by host (Tyr-141). Cys-230 and His-232 together coordinate Zn(2+). Residues 243–277 (VEMDVASENAQRALKEHPSRAKVVQNRWGRSVVQL) are flexible loop. Zn(2+)-binding residues include Cys-285, Cys-301, Cys-342, Cys-344, Cys-396, and Cys-412. Positions 459–473 (VALPASHGDGEKEPF) are C-terminal arm, DBP binding.

It belongs to the adenoviridae E2A DNA-binding protein family. As to quaternary structure, homomultimerizes on viral ssDNA bound to pTP. Forms a initiation complex with viral polymerase, pTP and hosts NFIA and POU2F1/OCT1. Interacts with host SRCAP.

It is found in the host nucleus. Its function is as follows. Plays a role in the elongation phase of viral strand displacement replication by unwinding the template in an ATP-independent fashion, employing its capacity to form multimers. Also enhances the rate of initiation. Released from template upon second strand synthesis. Assembles in complex with viral pTP, viral pol, host NFIA and host POU2F1/OCT1 on viral origin of replication. Covers the whole ssDNA genome during synthesis. The complementary strand synthesis induces its relese from DNA template. May inhibit cellular transcription mediated by the interaction between host SRCAP and CBP. This is DNA-binding protein from Homo sapiens (Human).